A 325-amino-acid chain; its full sequence is uncharacterized protein (325 aa).

Residues 1-75 (MSQPPEHPGN…PPPGYPTHLQ (75 aa)) are disordered. Pro residues predominate over residues 24-70 (YPPPGYGAPPPPPGYGPPPGTYLPPGYNAPPPPPGYGPPPGPPPPGY). Helical transmembrane passes span 96 to 116 (AVTL…VIGA), 153 to 173 (IVMF…HAGI), 205 to 225 (LLIV…GLIF), and 273 to 293 (LVGE…AALI).

To M.tuberculosis Rv2560.

The protein resides in the cell membrane. This is an uncharacterized protein from Mycobacterium bovis (strain ATCC BAA-935 / AF2122/97).